The sequence spans 1802 residues: Protein TIC 214 (1802 aa).

Helical transmembrane passes span 19 to 39 (IINS…FSIG), 68 to 88 (FIAG…HLAL), 91 to 111 (PHTI…WNNH), 133 to 153 (VFLN…SSML), 176 to 196 (VGWL…LVWI), and 227 to 247 (IFSI…PSPI).

This sequence belongs to the TIC214 family. Part of the Tic complex.

The protein localises to the plastid. It is found in the chloroplast inner membrane. Functionally, involved in protein precursor import into chloroplasts. May be part of an intermediate translocation complex acting as a protein-conducting channel at the inner envelope. The protein is Protein TIC 214 of Nasturtium officinale (Watercress).